The primary structure comprises 580 residues: Netrin-3 (580 aa).

The signal sequence occupies residues 1-27 (MPGWPWGLLLTAGTLFAALSPGPPAPA). In terms of domain architecture, Laminin N-terminal spans 36-254 (APRGCVPGLV…AATDLQVGGR (219 aa)). Positions 62-83 (PATRACDASDPRRAHSPALLTS) are disordered. Intrachain disulfides connect Cys-92/Cys-125, Cys-255/Cys-264, Cys-257/Cys-274, Cys-276/Cys-285, Cys-288/Cys-308, Cys-311/Cys-320, Cys-313/Cys-338, Cys-341/Cys-350, Cys-353/Cys-371, Cys-374/Cys-386, Cys-376/Cys-393, Cys-395/Cys-404, Cys-407/Cys-421, Cys-441/Cys-514, and Cys-460/Cys-577. A glycan (N-linked (GlcNAc...) asparagine) is linked at Asn-104. 3 consecutive Laminin EGF-like domains span residues 255–308 (CKCN…SHAC), 311–371 (CSCN…RRAC), and 374–421 (CDCH…VAPC). Asn-387 carries N-linked (GlcNAc...) asparagine glycosylation. Positions 441–577 (CDSHCKPARG…LQRRERRGRC (137 aa)) constitute an NTR domain. Positions 500–502 (RGS) match the Cell attachment site; atypical motif.

Spinal cord.

The protein resides in the secreted. The protein localises to the extracellular space. It localises to the extracellular matrix. Functionally, netrins control guidance of CNS commissural axons and peripheral motor axons. This Homo sapiens (Human) protein is Netrin-3 (NTN3).